Consider the following 371-residue polypeptide: Bifunctional enzyme IspD/IspF (371 aa).

Residues 1-210 (MSEISLIMLA…LDLPKPSFEI (210 aa)) are 2-C-methyl-D-erythritol 4-phosphate cytidylyltransferase. Positions 211–371 (FTGNGFDVHE…NLKYFDWTRL (161 aa)) are 2-C-methyl-D-erythritol 2,4-cyclodiphosphate synthase. A divalent metal cation contacts are provided by D217 and H219. Residues 217–219 (DVH) and 243–244 (HS) contribute to the 4-CDP-2-C-methyl-D-erythritol 2-phosphate site. H251 is a binding site for a divalent metal cation. 4-CDP-2-C-methyl-D-erythritol 2-phosphate is bound by residues 265-267 (DIG), 270-274 (YPDTD), 341-344 (TTTE), F348, and R351.

It in the N-terminal section; belongs to the IspD/TarI cytidylyltransferase family. IspD subfamily. In the C-terminal section; belongs to the IspF family. The cofactor is a divalent metal cation.

It catalyses the reaction 2-C-methyl-D-erythritol 4-phosphate + CTP + H(+) = 4-CDP-2-C-methyl-D-erythritol + diphosphate. The enzyme catalyses 4-CDP-2-C-methyl-D-erythritol 2-phosphate = 2-C-methyl-D-erythritol 2,4-cyclic diphosphate + CMP. It functions in the pathway isoprenoid biosynthesis; isopentenyl diphosphate biosynthesis via DXP pathway; isopentenyl diphosphate from 1-deoxy-D-xylulose 5-phosphate: step 2/6. It participates in isoprenoid biosynthesis; isopentenyl diphosphate biosynthesis via DXP pathway; isopentenyl diphosphate from 1-deoxy-D-xylulose 5-phosphate: step 4/6. Bifunctional enzyme that catalyzes the formation of 4-diphosphocytidyl-2-C-methyl-D-erythritol from CTP and 2-C-methyl-D-erythritol 4-phosphate (MEP) (IspD), and catalyzes the conversion of 4-diphosphocytidyl-2-C-methyl-D-erythritol 2-phosphate (CDP-ME2P) to 2-C-methyl-D-erythritol 2,4-cyclodiphosphate (ME-CPP) with a corresponding release of cytidine 5-monophosphate (CMP) (IspF). This Campylobacter jejuni subsp. doylei (strain ATCC BAA-1458 / RM4099 / 269.97) protein is Bifunctional enzyme IspD/IspF.